Reading from the N-terminus, the 367-residue chain is Germination protease (367 aa).

The propeptide occupies 1–15 (MKEPLDLSKYSVRTD).

The protein belongs to the peptidase A25 family. In terms of assembly, homotetramer. Post-translationally, autoproteolytically processed. The inactive tetrameric zymogen termed p46 autoprocesses to a smaller form termed p41, which is active only during spore germination.

The catalysed reaction is Endopeptidase action with P4 Glu or Asp, P1 preferably Glu &gt; Asp, P1' hydrophobic and P2' Ala.. In terms of biological role, initiates the rapid degradation of small, acid-soluble proteins during spore germination. This Bacillus thuringiensis subsp. konkukian (strain 97-27) protein is Germination protease.